Consider the following 122-residue polypeptide: ATP synthase epsilon chain (122 aa).

The protein belongs to the ATPase epsilon chain family. In terms of assembly, F-type ATPases have 2 components, CF(1) - the catalytic core - and CF(0) - the membrane proton channel. CF(1) has five subunits: alpha(3), beta(3), gamma(1), delta(1), epsilon(1). CF(0) has three main subunits: a, b and c.

Its subcellular location is the cell membrane. Its function is as follows. Produces ATP from ADP in the presence of a proton gradient across the membrane. This Rhodococcus erythropolis (strain PR4 / NBRC 100887) protein is ATP synthase epsilon chain.